Here is a 343-residue protein sequence, read N- to C-terminus: Holliday junction branch migration complex subunit RuvB (343 aa).

The interval 1–186 (MVMARKSDTL…FQIQERLEYY (186 aa)) is large ATPase domain (RuvB-L). Residues leucine 25, arginine 26, glycine 67, lysine 70, threonine 71, serine 72, 133–135 (EDF), arginine 176, tyrosine 186, and arginine 223 each bind ATP. Threonine 71 is a Mg(2+) binding site. The tract at residues 187–257 (DAKALESILH…LAQKSLDRLG (71 aa)) is small ATPAse domain (RuvB-S). The segment at 260 to 343 (ASGLDSMDRK…PPPTPQGSLF (84 aa)) is head domain (RuvB-H). Residues arginine 296, arginine 315, and arginine 320 each coordinate DNA.

The protein belongs to the RuvB family. As to quaternary structure, homohexamer. Forms an RuvA(8)-RuvB(12)-Holliday junction (HJ) complex. HJ DNA is sandwiched between 2 RuvA tetramers; dsDNA enters through RuvA and exits via RuvB. An RuvB hexamer assembles on each DNA strand where it exits the tetramer. Each RuvB hexamer is contacted by two RuvA subunits (via domain III) on 2 adjacent RuvB subunits; this complex drives branch migration. In the full resolvosome a probable DNA-RuvA(4)-RuvB(12)-RuvC(2) complex forms which resolves the HJ.

It localises to the cytoplasm. It carries out the reaction ATP + H2O = ADP + phosphate + H(+). In terms of biological role, the RuvA-RuvB-RuvC complex processes Holliday junction (HJ) DNA during genetic recombination and DNA repair, while the RuvA-RuvB complex plays an important role in the rescue of blocked DNA replication forks via replication fork reversal (RFR). RuvA specifically binds to HJ cruciform DNA, conferring on it an open structure. The RuvB hexamer acts as an ATP-dependent pump, pulling dsDNA into and through the RuvAB complex. RuvB forms 2 homohexamers on either side of HJ DNA bound by 1 or 2 RuvA tetramers; 4 subunits per hexamer contact DNA at a time. Coordinated motions by a converter formed by DNA-disengaged RuvB subunits stimulates ATP hydrolysis and nucleotide exchange. Immobilization of the converter enables RuvB to convert the ATP-contained energy into a lever motion, pulling 2 nucleotides of DNA out of the RuvA tetramer per ATP hydrolyzed, thus driving DNA branch migration. The RuvB motors rotate together with the DNA substrate, which together with the progressing nucleotide cycle form the mechanistic basis for DNA recombination by continuous HJ branch migration. Branch migration allows RuvC to scan DNA until it finds its consensus sequence, where it cleaves and resolves cruciform DNA. The polypeptide is Holliday junction branch migration complex subunit RuvB (Myxococcus xanthus (strain DK1622)).